Reading from the N-terminus, the 918-residue chain is MESSNHLPNKDSDTVSVTPVEFSNYQCEINPGFNDFLKKSGFEDFGFKFNVVTILGSQSSGKSHLLNSLFNASFQTMDASKGHSQTTKGIWGSLVLSKDTSMNATVVFDSEGTDSRERGEGRLTFEHRSSLFCLALSDVVIVNIWYNSMGNLTGSNYGLLKTVVEANLELVDTNNEENYKTVLFFCVRDWSPSLSPLNVVKDYVLNNYMSSIWNEISKPARFENLGVESLFEIRVFGLSNAVTQSESFEMDVKEVKKTWNSLKPREYSRRVPSDGFFVYSKNVWKTIIEQNHLDIPTQKEMLSSYRCSEIKTMILESLTNALPELKEKDFSEYLMGLLKKVENQYFSQASRYDPVVSKKVGKELLEQVCRKFQPFFESALGDYVKKLAVESSSLLDKEFSVNSSGKELKVSNARPYTVWPNFSKKCEELQKKQTEKLSHHLSSFKVTFKSTVSFEFEFEYQPLKDHLNLLVSSEFEVLRSRHLELLKQQLDSMCNSCFALVKNNMMDRSLNEDQFWDYFDELFDETHKNCVDQLTTSYVGLVKGATRTEFEQLSLVLLLKATQSNFEELQNNLEQLLLERFDKFFNYQEFKGELIPTEWHKQSAQELNNRYKESKEDALTLLQVLKTTKTKKLPSFDANYVKKNQYFYSTLEGPVSDKYSSPLTEQFTIELTNSCSKKFMEMYKNAQVVQNAGTSVSSWRNIPPVFWLVLLVLGWNELRAAFRVLLKFYILIPLLIVSYFTFSYSANKLLGPKANEYVKPVRDKALSLLTALFAWFVRTLHMIASKSSSFKQQTKNLKMAKKGNKNRDSDDEYVGKTVTKSSHSIYKHREPMDINLIVDHDEVEAEKNNLPCWRAAYASGPARPQRHLCVICGFFANYKCRNCATRRIEAINSYYCSLRCLEVHNETNCGKAVHLAQW.

The Cytoplasmic portion of the chain corresponds to 1 to 701 (MESSNHLPNK…AGTSVSSWRN (701 aa)). The region spanning 46-280 (GFKFNVVTIL…VPSDGFFVYS (235 aa)) is the GB1/RHD3-type G domain. 56–63 (GSQSSGKS) contacts GTP. A coiled-coil region spans residues 554–626 (SLVLLLKATQ…DALTLLQVLK (73 aa)). Residues 702–722 (IPPVFWLVLLVLGWNELRAAF) traverse the membrane as a helical segment. Residues 723 to 725 (RVL) are Lumenal-facing. A helical membrane pass occupies residues 726–746 (LKFYILIPLLIVSYFTFSYSA). At 747–918 (NKLLGPKANE…CGKAVHLAQW (172 aa)) the chain is on the cytoplasmic side.

Belongs to the TRAFAC class dynamin-like GTPase superfamily. GB1/RHD3 GTPase family. RHD3 subfamily.

It is found in the endoplasmic reticulum membrane. In terms of biological role, probable GTP-binding protein that may be involved in cell development. This chain is Protein SEY1 homolog, found in Theileria annulata.